The chain runs to 1017 residues: Protein HIRA (1017 aa).

WD repeat units lie at residues 11–53 (HNGK…QEDD) and 68–107 (NHLA…GPST). Phosphoserine is present on Ser111. 5 WD repeats span residues 129-168 (NHSG…EILA), 172-211 (GHSG…LETS), 220-263 (GGTT…TNMD), 266-322 (GHRK…PLVV), and 326-367 (LFDK…DPLS). The tract at residues 421–479 (REMGSATSVAGVVNGESLEDIRKNLLKKQVETRTADGRRRITPLCIAQLDTGDFSTAFF) is interaction with ASF1A. Residues 421–729 (REMGSATSVA…RLKCNREGKE (309 aa)) are interaction with CCNA1. Residues 439–475 (EDIRKNLLKKQVETRTADGRRRITPLCIAQLDTGDFS) form a required for repression of histone gene transcription region. The segment covering 494 to 509 (SSHSSPQLLPLDSSTP) has biased composition (low complexity). Residues 494–555 (SSHSSPQLLP…AALSPSVLTT (62 aa)) form a disordered region. The segment covering 536 to 555 (KDSMNATSTPAALSPSVLTT) has biased composition (polar residues). Ser549 bears the Phosphoserine mark. Thr555 carries the phosphothreonine; by CDK2 modification. Ser557 carries the phosphoserine modification. Disordered stretches follow at residues 570 to 589 (TERS…TPTA) and 604 to 625 (PRDL…KASS). A Phosphothreonine modification is found at Thr576. Ser584 is subject to Phosphoserine. Thr586 is subject to Phosphothreonine. The tract at residues 593–826 (LKEQNLVKEL…LAGSDMTVSQ (234 aa)) is interaction with histone H2B. Interaction with PAX3 stretches follow at residues 594-739 (KEQN…SRIL) and 740-828 (TAAG…SQIL). The span at 604-619 (PRDLLESSSDSDEKVP) shows a compositional bias: basic and acidic residues. Ser610, Ser611, Ser612, Ser614, Ser661, Ser675, and Ser687 each carry phosphoserine. The interaction with histone H4 stretch occupies residues 738–1017 (ILTAAGSCDV…QEQLDILRDK (280 aa)).

This sequence belongs to the WD repeat HIR1 family. In terms of assembly, interacts with histone H3-3B, PAX3 and PAX7. Interacts with histone H3.Y. Interacts with CCNA1, HIRIP3, NFU1/HIRIP5 and histone H2B. Part of a complex which includes ASF1A, CABIN1, histone H3.3, histone H4 and UBN1. In terms of processing, sumoylated. Post-translationally, phosphorylated by CDK2/CCNA1 and CDK2/CCNE1 on Thr-555 in vitro. Also phosphorylated on Thr-555 and Ser-687 in vivo. In terms of tissue distribution, expressed at high levels in kidney, pancreas and skeletal muscle and at lower levels in brain, heart, liver, lung, and placenta.

It is found in the nucleus. Its subcellular location is the PML body. Cooperates with ASF1A to promote replication-independent chromatin assembly. Required for the periodic repression of histone gene transcription during the cell cycle. Required for the formation of senescence-associated heterochromatin foci (SAHF) and efficient senescence-associated cell cycle exit. This Homo sapiens (Human) protein is Protein HIRA (HIRA).